A 225-amino-acid polypeptide reads, in one-letter code: Cyclin-dependent kinase inhibitor 3 (225 aa).

Disordered regions lie at residues 47-94 (AAAA…QRRR) and 130-169 (ERKSLKPNSCSREVAAEHAGEHKHNPAAAAAAGRRPPLSP). A compositionally biased stretch (basic residues) spans 55–67 (CRRRHRRGGRRGC). A compositionally biased stretch (low complexity) spans 71 to 82 (GAGSARACGARS). A compositionally biased stretch (basic and acidic residues) spans 143–153 (VAAEHAGEHKH).

The protein belongs to the CDI family. ICK/KRP subfamily.

The chain is Cyclin-dependent kinase inhibitor 3 (KRP3) from Oryza sativa subsp. japonica (Rice).